The primary structure comprises 281 residues: Large ribosomal subunit protein uL2 (281 aa).

The span at 27 to 38 (DSPEKSLTEPLK) shows a compositional bias: basic and acidic residues. 2 disordered regions span residues 27–59 (DSPEKSLTEPLKRSGGRNVHGHITRRHQGGGHK) and 225–281 (AMNP…ARSQ). The segment covering 45–59 (VHGHITRRHQGGGHK) has biased composition (basic residues).

This sequence belongs to the universal ribosomal protein uL2 family. As to quaternary structure, part of the 50S ribosomal subunit. Forms a bridge to the 30S subunit in the 70S ribosome.

Its function is as follows. One of the primary rRNA binding proteins. Required for association of the 30S and 50S subunits to form the 70S ribosome, for tRNA binding and peptide bond formation. It has been suggested to have peptidyltransferase activity; this is somewhat controversial. Makes several contacts with the 16S rRNA in the 70S ribosome. This chain is Large ribosomal subunit protein uL2, found in Myxococcus xanthus (strain DK1622).